The chain runs to 465 residues: ATP synthase subunit beta (465 aa).

153-160 (GGAGVGKT) provides a ligand contact to ATP.

The protein belongs to the ATPase alpha/beta chains family. F-type ATPases have 2 components, CF(1) - the catalytic core - and CF(0) - the membrane proton channel. CF(1) has five subunits: alpha(3), beta(3), gamma(1), delta(1), epsilon(1). CF(0) has three main subunits: a(1), b(2) and c(9-12). The alpha and beta chains form an alternating ring which encloses part of the gamma chain. CF(1) is attached to CF(0) by a central stalk formed by the gamma and epsilon chains, while a peripheral stalk is formed by the delta and b chains.

The protein resides in the cell membrane. The catalysed reaction is ATP + H2O + 4 H(+)(in) = ADP + phosphate + 5 H(+)(out). In terms of biological role, produces ATP from ADP in the presence of a proton gradient across the membrane. The catalytic sites are hosted primarily by the beta subunits. The sequence is that of ATP synthase subunit beta from Clostridium perfringens (strain SM101 / Type A).